A 452-amino-acid polypeptide reads, in one-letter code: Flavanone 7-O-glucoside 2''-O-beta-L-rhamnosyltransferase (452 aa).

The Proton acceptor role is filled by histidine 21. Histidine 21 contributes to the an anthocyanidin binding site. Aspartate 121 serves as the catalytic Charge relay. Residues 136–156 form a helical membrane-spanning segment; it reads IAAILFLPLSAVACSFLLHNI. 6 residues coordinate UDP-beta-L-rhamnose: serine 268, valine 330, histidine 347, glycine 351, serine 352, and glutamate 355. The stretch at 407–436 forms a coiled coil; it reads KHVVLQEEAKQIRRKANEISESMKKIGDAE.

It belongs to the UDP-glycosyltransferase family. Monomer. As to expression, expressed in young fruits and leaves.

Its subcellular location is the membrane. The enzyme catalyses flavanone 7-O-beta-D-glucoside + UDP-beta-L-rhamnose = flavanone 7-O-[alpha-L-rhamnosyl-(1-&gt;2)-beta-D-glucoside] + UDP + H(+). In terms of biological role, involved in the production of the bitter neohesperidosides in citrus. Shows a strict specificity for UDP-rhamnose as donor. This Citrus maxima (Pomelo) protein is Flavanone 7-O-glucoside 2''-O-beta-L-rhamnosyltransferase (C12RT1).